A 179-amino-acid polypeptide reads, in one-letter code: Cell division protein ZapC (179 aa).

The protein belongs to the ZapC family. As to quaternary structure, interacts directly with FtsZ.

It localises to the cytoplasm. Its function is as follows. Contributes to the efficiency of the cell division process by stabilizing the polymeric form of the cell division protein FtsZ. Acts by promoting interactions between FtsZ protofilaments and suppressing the GTPase activity of FtsZ. This Photobacterium profundum (strain SS9) protein is Cell division protein ZapC.